A 319-amino-acid polypeptide reads, in one-letter code: tRNA uridine(34) hydroxylase (319 aa).

A Rhodanese domain is found at 127–221; the sequence is KQEDTVIIDA…YGKDPEVQGE (95 aa). Residue C181 is the Cysteine persulfide intermediate of the active site.

Belongs to the TrhO family.

The enzyme catalyses uridine(34) in tRNA + AH2 + O2 = 5-hydroxyuridine(34) in tRNA + A + H2O. Its function is as follows. Catalyzes oxygen-dependent 5-hydroxyuridine (ho5U) modification at position 34 in tRNAs. In Bacillus mycoides (strain KBAB4) (Bacillus weihenstephanensis), this protein is tRNA uridine(34) hydroxylase.